A 405-amino-acid chain; its full sequence is Maintenance of mitochondrial morphology protein 1 (405 aa).

Residues 1 to 86 (MQVLNFYVNP…TGSTKSFTQG (86 aa)) lie on the Lumenal side of the membrane. A helical membrane pass occupies residues 87 to 107 (LIIGQLSVIILLGIFIKFFVF). At 108–405 (ADSSTTSSTS…QPVSTTESDH (298 aa)) the chain is on the cytoplasmic side. The region spanning 166–385 (APESLDWFNV…EPRFQVVKLP (220 aa)) is the SMP-LTD domain. Positions 303–324 (SEPRVAMDSPQSTRDDNSEEPN) are disordered.

The protein belongs to the MMM1 family. Homodimer. Component of the ER-mitochondria encounter structure (ERMES) or MDM complex, composed of MMM1, MDM10, MDM12 and MDM34. An MMM1 homodimer associates with one molecule of MDM12 on each side in a pairwise head-to-tail manner, and the SMP-LTD domains of MMM1 and MDM12 generate a continuous hydrophobic tunnel for phospholipid trafficking.

The protein resides in the endoplasmic reticulum membrane. Functionally, component of the ERMES/MDM complex, which serves as a molecular tether to connect the endoplasmic reticulum (ER) and mitochondria. Components of this complex are involved in the control of mitochondrial shape and protein biogenesis, and function in nonvesicular lipid trafficking between the ER and mitochondria. The MDM12-MMM1 subcomplex functions in the major beta-barrel assembly pathway that is responsible for biogenesis of all outer membrane beta-barrel proteins, and acts in a late step after the SAM complex. The MDM10-MDM12-MMM1 subcomplex further acts in the TOM40-specific pathway after the action of the MDM12-MMM1 complex. Essential for establishing and maintaining the structure of mitochondria and maintenance of mtDNA nucleoids. The sequence is that of Maintenance of mitochondrial morphology protein 1 from Meyerozyma guilliermondii (strain ATCC 6260 / CBS 566 / DSM 6381 / JCM 1539 / NBRC 10279 / NRRL Y-324) (Yeast).